We begin with the raw amino-acid sequence, 138 residues long: Nucleoside diphosphate kinase (138 aa).

The ATP site is built by K10, F58, R86, T92, R103, and N113. Catalysis depends on H116, which acts as the Pros-phosphohistidine intermediate.

It belongs to the NDK family. As to quaternary structure, homotetramer. Mg(2+) is required as a cofactor.

Its subcellular location is the cytoplasm. It carries out the reaction a 2'-deoxyribonucleoside 5'-diphosphate + ATP = a 2'-deoxyribonucleoside 5'-triphosphate + ADP. It catalyses the reaction a ribonucleoside 5'-diphosphate + ATP = a ribonucleoside 5'-triphosphate + ADP. In terms of biological role, major role in the synthesis of nucleoside triphosphates other than ATP. The ATP gamma phosphate is transferred to the NDP beta phosphate via a ping-pong mechanism, using a phosphorylated active-site intermediate. This chain is Nucleoside diphosphate kinase, found in Haemophilus ducreyi (strain 35000HP / ATCC 700724).